A 390-amino-acid polypeptide reads, in one-letter code: MKFVDEAAILVVAGDGGNGCVSFRREKYIPNGGPDGGDGGDGGDIYLLADENLNTLIDYRFVKSFRAERGQNGQSRDCTGKRGKDITIKVPVGTRVLDQGTGEIVGDMVRHGQRLMVAKGGFHGLGNSRFKSSVNRAPRQKTMGTEGETRELMLELLLLADVGMLGLPNAGKSTFIRAVSAAKPKVADYPFTTLIPSLGVVRMDYEQSFVIADIPGLIEGASDGAGLGIRFLKHLERCRVLLHLVDLAPIDESDPAENAKVIVNELQQYSENLAEKPRWLVFNKIDLIDPEEAEKRAKAIVETLGWEGKYYMISAANRDNVNALCWDVMSFLNSQPKAMAIAESVPEKVEFMWDDYHREQLAEVEAEAEDDWDDDWDEEDDDGVEIIYER.

An Obg domain is found at M1–L159. The OBG-type G domain maps to A160–N333. GTP-binding positions include G166–S173, F191–I195, D213–G216, N283–D286, and S314–A316. Mg(2+) is bound by residues S173 and T193. A compositionally biased stretch (acidic residues) spans V364–V384. The tract at residues V364–R390 is disordered.

Belongs to the TRAFAC class OBG-HflX-like GTPase superfamily. OBG GTPase family. Monomer. It depends on Mg(2+) as a cofactor.

The protein localises to the cytoplasm. Functionally, an essential GTPase which binds GTP, GDP and possibly (p)ppGpp with moderate affinity, with high nucleotide exchange rates and a fairly low GTP hydrolysis rate. Plays a role in control of the cell cycle, stress response, ribosome biogenesis and in those bacteria that undergo differentiation, in morphogenesis control. In Yersinia pestis, this protein is GTPase Obg.